The sequence spans 1551 residues: UDP-glucose:glycoprotein glucosyltransferase 1 (1551 aa).

A signal peptide spans Met1–Ala42. N-linked (GlcNAc...) asparagine glycans are attached at residues Asn269, Asn536, Asn1015, and Asn1228. Residues Lys1244–Leu1551 form a glucosyltransferase region. Ser1277 bears the Phosphoserine mark. The segment at Lys1531–Leu1551 is disordered. The Prevents secretion from ER signature appears at His1548 to Leu1551.

It belongs to the glycosyltransferase 8 family. In terms of assembly, monomer as well as in a tight complex with SELENOF. Interacts with METTL23. Part of a large chaperone multiprotein complex comprising DNAJB11, HSP90B1, HSPA5, HYOU, PDIA2, PDIA4, PDIA6, PPIB, SDF2L1, UGGT1 and very small amounts of ERP29, but not, or at very low levels, CALR nor CANX. Ca(2+) is required as a cofactor.

It is found in the endoplasmic reticulum lumen. It localises to the endoplasmic reticulum-Golgi intermediate compartment. It carries out the reaction N(4)-(alpha-D-Man-(1-&gt;2)-alpha-D-Man-(1-&gt;2)-alpha-D-Man-(1-&gt;3)-[alpha-D-Man-(1-&gt;2)-alpha-D-Man-(1-&gt;3)-[alpha-D-Man-(1-&gt;2)-alpha-D-Man-(1-&gt;6)]-alpha-D-Man-(1-&gt;6)]-beta-D-Man-(1-&gt;4)-beta-D-GlcNAc-(1-&gt;4)-beta-D-GlcNAc)-L-asparaginyl-[protein] (N-glucan mannose isomer 9A1,2,3B1,2,3) + UDP-alpha-D-glucose = N(4)-(alpha-D-Glc-(1-&gt;3)-alpha-D-Man-(1-&gt;2)-alpha-D-Man-(1-&gt;2)-alpha-D-Man-(1-&gt;3)-[alpha-D-Man-(1-&gt;2)-alpha-D-Man-(1-&gt;3)-[alpha-D-Man-(1-&gt;2)-alpha-D-Man-(1-&gt;6)]-alpha-D-Man-(1-&gt;6)]-beta-D-Man-(1-&gt;4)-beta-D-GlcNAc-(1-&gt;4)-beta-D-GlcNAc)-L-asparaginyl-[protein] + UDP + H(+). The protein operates within protein modification; protein glycosylation. Its function is as follows. Recognizes glycoproteins with minor folding defects. Reglucosylates single N-glycans near the misfolded part of the protein, thus providing quality control for protein folding in the endoplasmic reticulum. Reglucosylated proteins are recognized by calreticulin for recycling to the endoplasmic reticulum and refolding or degradation. The chain is UDP-glucose:glycoprotein glucosyltransferase 1 (Uggt1) from Rattus norvegicus (Rat).